We begin with the raw amino-acid sequence, 397 residues long: Major outer membrane porin, serovar C (397 aa).

The first 22 residues, 1–22 (MKKLLKSVLVFAALSSASSLQA), serve as a signal peptide directing secretion.

This sequence belongs to the chlamydial porin (CP) (TC 1.B.2) family. As to quaternary structure, part of a disulfide cross-linked outer membrane complex (COMC) composed of the major outer membrane porin (MOMP), the small cysteine-rich protein (OmcA) and the large cysteine-rich periplasmic protein (OmcB).

The protein localises to the cell outer membrane. Functionally, in elementary bodies (EBs, the infectious stage, which is able to survive outside the host cell) provides the structural integrity of the outer envelope through disulfide cross-links with the small cysteine-rich protein and the large cysteine-rich periplasmic protein. It has been described in publications as the Sarkosyl-insoluble COMC (Chlamydia outer membrane complex), and serves as the functional equivalent of peptidoglycan. Its function is as follows. Permits diffusion of specific solutes through the outer membrane. The protein is Major outer membrane porin, serovar C (ompA) of Chlamydia trachomatis.